The sequence spans 284 residues: 4-hydroxybenzoate octaprenyltransferase (284 aa).

Helical transmembrane passes span 33–53 (VIAA…LGVF), 93–113 (IGLF…MNPL), 136–156 (HIPQ…AWAA), 159–179 (GELP…TIAY), 209–229 (LIIG…GQFY), 235–252 (YYWT…QQHL), and 264–284 (AFLN…VAFW).

Belongs to the UbiA prenyltransferase family. Mg(2+) serves as cofactor.

Its subcellular location is the cell inner membrane. It carries out the reaction all-trans-octaprenyl diphosphate + 4-hydroxybenzoate = 4-hydroxy-3-(all-trans-octaprenyl)benzoate + diphosphate. It participates in cofactor biosynthesis; ubiquinone biosynthesis. Functionally, catalyzes the prenylation of para-hydroxybenzoate (PHB) with an all-trans polyprenyl group. Mediates the second step in the final reaction sequence of ubiquinone-8 (UQ-8) biosynthesis, which is the condensation of the polyisoprenoid side chain with PHB, generating the first membrane-bound Q intermediate 3-octaprenyl-4-hydroxybenzoate. The chain is 4-hydroxybenzoate octaprenyltransferase from Vibrio parahaemolyticus serotype O3:K6 (strain RIMD 2210633).